The sequence spans 124 residues: Small ribosomal subunit protein uS12 (124 aa).

Position 89 is a 3-methylthioaspartic acid (aspartate 89).

Belongs to the universal ribosomal protein uS12 family. Part of the 30S ribosomal subunit. Contacts proteins S8 and S17. May interact with IF1 in the 30S initiation complex.

In terms of biological role, with S4 and S5 plays an important role in translational accuracy. Functionally, interacts with and stabilizes bases of the 16S rRNA that are involved in tRNA selection in the A site and with the mRNA backbone. Located at the interface of the 30S and 50S subunits, it traverses the body of the 30S subunit contacting proteins on the other side and probably holding the rRNA structure together. The combined cluster of proteins S8, S12 and S17 appears to hold together the shoulder and platform of the 30S subunit. In Aliivibrio salmonicida (strain LFI1238) (Vibrio salmonicida (strain LFI1238)), this protein is Small ribosomal subunit protein uS12.